The sequence spans 336 residues: Ribose-phosphate pyrophosphokinase 1 (336 aa).

4 residues coordinate Mg(2+): D150, H152, D161, and D165. The tract at residues 236-251 (GKVAVMVDDMIDTAGT) is binding of phosphoribosylpyrophosphate.

The protein belongs to the ribose-phosphate pyrophosphokinase family.

The enzyme catalyses D-ribose 5-phosphate + ATP = 5-phospho-alpha-D-ribose 1-diphosphate + AMP + H(+). In Spinacia oleracea (Spinach), this protein is Ribose-phosphate pyrophosphokinase 1 (PRS1).